Here is a 376-residue protein sequence, read N- to C-terminus: Actin, macronuclear (376 aa).

The protein belongs to the actin family.

The protein resides in the cytoplasm. The protein localises to the cytoskeleton. The enzyme catalyses ATP + H2O = ADP + phosphate + H(+). Actins are highly conserved proteins that are involved in various types of cell motility and are ubiquitously expressed in all eukaryotic cells. This is Actin, macronuclear from Tetrahymena thermophila.